The sequence spans 517 residues: Beta-galactoside alpha-2,6-sialyltransferase 2 (517 aa).

The Cytoplasmic portion of the chain corresponds to 1–10 (MKPNLKQWKQ). Residues 11–31 (FMLFGICAWGLLFLVIFVYFT) traverse the membrane as a helical; Signal-anchor for type II membrane protein segment. Over 32–517 (DSNSVEPVPS…IHCPIKDHIT (486 aa)) the chain is Lumenal. N-linked (GlcNAc...) asparagine glycosylation is found at Asn-201, Asn-298, and Asn-328. Intrachain disulfides connect Cys-244–Cys-510, Cys-287–Cys-439, and Cys-457–Cys-468.

It belongs to the glycosyltransferase 29 family.

It localises to the golgi apparatus. The protein resides in the golgi stack membrane. The catalysed reaction is a beta-D-galactoside + CMP-N-acetyl-beta-neuraminate = an N-acetyl-alpha-neuraminyl-(2-&gt;6)-beta-D-galactosyl derivative + CMP + H(+). In terms of biological role, transfers sialic acid from the donor of substrate CMP-sialic acid to galactose containing acceptor substrates. In Xenopus tropicalis (Western clawed frog), this protein is Beta-galactoside alpha-2,6-sialyltransferase 2 (st6gal2).